The following is a 426-amino-acid chain: Histidine--tRNA ligase (426 aa).

The protein belongs to the class-II aminoacyl-tRNA synthetase family.

The protein localises to the cytoplasm. The catalysed reaction is tRNA(His) + L-histidine + ATP = L-histidyl-tRNA(His) + AMP + diphosphate + H(+). In Saccharolobus islandicus (strain M.16.27) (Sulfolobus islandicus), this protein is Histidine--tRNA ligase.